A 726-amino-acid chain; its full sequence is Methionine--tRNA ligase (726 aa).

Residues 12-22 (PYVNNIPHLGN) carry the 'HIGH' region motif. Cys143, Cys146, Cys155, and Cys158 together coordinate Zn(2+). The 'KMSKS' region signature appears at 330–334 (KFSKS). Residue Lys333 participates in ATP binding. The tRNA-binding domain maps to 562–667 (FSEQICLKTV…DNPIPGERVI (106 aa)).

The protein belongs to the class-I aminoacyl-tRNA synthetase family. MetG type 1 subfamily. As to quaternary structure, homodimer. Zn(2+) is required as a cofactor.

Its subcellular location is the cytoplasm. The catalysed reaction is tRNA(Met) + L-methionine + ATP = L-methionyl-tRNA(Met) + AMP + diphosphate. In terms of biological role, is required not only for elongation of protein synthesis but also for the initiation of all mRNA translation through initiator tRNA(fMet) aminoacylation. The sequence is that of Methionine--tRNA ligase from Borrelia recurrentis (strain A1).